The primary structure comprises 704 residues: Elongation factor G (704 aa).

A tr-type G domain is found at 8–290 (ARYRNIGISA…AVIDYLPSPV (283 aa)). GTP contacts are provided by residues 17–24 (AHIDAGKT), 88–92 (DTPGH), and 142–145 (NKMD). Lys-504 and Lys-643 each carry N6-acetyllysine.

It belongs to the TRAFAC class translation factor GTPase superfamily. Classic translation factor GTPase family. EF-G/EF-2 subfamily.

It localises to the cytoplasm. Catalyzes the GTP-dependent ribosomal translocation step during translation elongation. During this step, the ribosome changes from the pre-translocational (PRE) to the post-translocational (POST) state as the newly formed A-site-bound peptidyl-tRNA and P-site-bound deacylated tRNA move to the P and E sites, respectively. Catalyzes the coordinated movement of the two tRNA molecules, the mRNA and conformational changes in the ribosome. This chain is Elongation factor G, found in Shigella flexneri.